The chain runs to 274 residues: MQAILSSWFIQGMIKATSDMWHKGWDERNGGNISLRLLAEEVEPYRRDFYQQPRKVELTQPAPELANSWFLVTGSGKFFRNVELNPAENLVLLQVSNDGMAYHIHWGLTQGGLPTSELAAHFQSHIVRMQVSGGTNRVIMHCHATNLIALSYVQKLENASFTRLLWEGSTECLVVFPDGIGIVPWMVPGTDGIGTQTAEQMREHSLVLWPFHGIFGSGPTLDDAFGLIDTAEKSAEIMVKVLSMGGKKQTISREQLIALAARFDVTPMAAALDA.

The active site involves glutamate 117. Histidine 141, histidine 143, and histidine 212 together coordinate Zn(2+).

This sequence belongs to the aldolase class II family. RhaD subfamily. In terms of assembly, homotetramer. Zn(2+) serves as cofactor.

It is found in the cytoplasm. The enzyme catalyses L-rhamnulose 1-phosphate = (S)-lactaldehyde + dihydroxyacetone phosphate. Its pathway is carbohydrate degradation; L-rhamnose degradation; glycerone phosphate from L-rhamnose: step 3/3. In terms of biological role, catalyzes the reversible cleavage of L-rhamnulose-1-phosphate to dihydroxyacetone phosphate (DHAP) and L-lactaldehyde. The sequence is that of Rhamnulose-1-phosphate aldolase from Yersinia pestis.